The chain runs to 428 residues: Adenylosuccinate synthetase (428 aa).

GTP-binding positions include 12-18 (GDEGKGK) and 40-42 (GHS). Aspartate 13 serves as the catalytic Proton acceptor. Mg(2+)-binding residues include aspartate 13 and glycine 40. Residues 13–16 (DEGK), 38–41 (NAGH), threonine 128, arginine 142, glutamine 223, threonine 238, and arginine 302 each bind IMP. Residue histidine 41 is the Proton donor of the active site. 298–304 (VTTGRPR) lines the substrate pocket. GTP-binding positions include arginine 304, 330–332 (KLD), and 412–414 (GTG).

It belongs to the adenylosuccinate synthetase family. In terms of assembly, homodimer. The cofactor is Mg(2+).

The protein resides in the cytoplasm. The catalysed reaction is IMP + L-aspartate + GTP = N(6)-(1,2-dicarboxyethyl)-AMP + GDP + phosphate + 2 H(+). The protein operates within purine metabolism; AMP biosynthesis via de novo pathway; AMP from IMP: step 1/2. In terms of biological role, plays an important role in the de novo pathway of purine nucleotide biosynthesis. Catalyzes the first committed step in the biosynthesis of AMP from IMP. This Bifidobacterium longum (strain NCC 2705) protein is Adenylosuccinate synthetase.